A 305-amino-acid polypeptide reads, in one-letter code: Alpha-N-acetylgalactosaminide alpha-2,6-sialyltransferase 3 (305 aa).

Residues 1–8 (MACILKRK) lie on the Cytoplasmic side of the membrane. Residues 9–28 (PVLVVSFIALCILLLAMRLV) form a helical; Signal-anchor for type II membrane protein membrane-spanning segment. Residues 29–305 (NDATFPLLLN…VFTHPNWTLS (277 aa)) lie on the Lumenal side of the membrane. Cys80 and Cys229 are oxidised to a cystine. Asn239 and Asn301 each carry an N-linked (GlcNAc...) asparagine glycan.

It belongs to the glycosyltransferase 29 family. In terms of tissue distribution, in adult tissues, high expression in brain, lung and heart and to a lesser extent in kidney, mammary gland, spleen, testis and thymus.

The protein resides in the golgi apparatus membrane. The enzyme catalyses an alpha-Neu5Ac-(2-&gt;3)-beta-D-Gal-(1-&gt;3)-D-GlcNAc derivative + CMP-N-acetyl-beta-neuraminate = an alpha-Neu5Ac-(2-&gt;3)-beta-D-Gal-(1-&gt;3)-[alpha-Neu5Ac-(2-&gt;6)]-D-GlcNAc derivative + CMP + H(+). The catalysed reaction is a ganglioside GM1b (d18:1(4E)) + CMP-N-acetyl-beta-neuraminate = a ganglioside GD1alpha (d18:1(4E)) + CMP + H(+). It catalyses the reaction a globoside MSGG + CMP-N-acetyl-beta-neuraminate = a globoside DSGG + CMP + H(+). It carries out the reaction 3-O-[alpha-Neu5Ac-(2-&gt;3)-beta-D-Gal-(1-&gt;3)-alpha-D-GalNAc]-L-Ser-[protein] + CMP-N-acetyl-beta-neuraminate = a 3-O-{alpha-Neu5Ac-(2-&gt;3)-beta-D-Gal-(1-&gt;3)-[alpha-Neu5Ac-(2-&gt;6)]-alpha-D-GalNAc}-L-seryl-[protein] + CMP + H(+). The enzyme catalyses 3-O-[alpha-Neu5Ac-(2-&gt;3)-beta-D-Gal-(1-&gt;3)-alpha-D-GalNAc]-L-Thr-[protein] + CMP-N-acetyl-beta-neuraminate = a 3-O-{alpha-Neu5Ac-(2-&gt;3)-beta-D-Gal-(1-&gt;3)-[alpha-Neu5Ac-(2-&gt;6)]-alpha-D-GalNAc}-L-threonyl-[protein] + CMP + H(+). Its pathway is protein modification; protein glycosylation. It participates in glycolipid biosynthesis. Its function is as follows. Transfers the sialyl group (N-acetyl-alpha-neuraminyl or NeuAc) from CMP-NeuAc to the GalNAc residue on the NeuAc-alpha-2,3-Gal-beta-1,3-GalNAc sequence of glycoproteins and glycolipids forming an alpha-2,6-linkage. Produces branched type disialyl structures by transfer of a sialyl group onto a GalNAc residue inside the backbone core chains. ST6GalNAcIII prefers glycolipids to glycoproteins, predominantly catalyzing the biosynthesis of ganglioside GD1alpha from GM1b. GD1alpha is a critical molecule in the communication and interaction between neuronal cells and their supportive cells, particularly in brain tissues, and functions as an adhesion molecule in the process of metastasis. Sialylation of glycoproteins or glycosphingolipids is very important in tumor development, neuronal development, nerve repair, immunological processes and regulation of hormone sensitivity. This is Alpha-N-acetylgalactosaminide alpha-2,6-sialyltransferase 3 (St6galnac3) from Mus musculus (Mouse).